Reading from the N-terminus, the 105-residue chain is Sulfite reductase, dissimilatory-type subunit gamma (105 aa).

This sequence belongs to the DsrC/TusE family. Heterohexamer of two alpha, two beta and two gamma subunits.

Its subcellular location is the cytoplasm. It catalyses the reaction [DsrC protein]-trisulfide + NAD(+) + 3 H2O = [DsrC protein]-dithiol + sulfite + NADH + 3 H(+). Functionally, catalyzes the reduction of sulfite to sulfide. This is the terminal oxidation reaction in sulfate respiration, a process catalyzed by the sulfate-reducing bacteria. The protein is Sulfite reductase, dissimilatory-type subunit gamma (dsvC) of Nitratidesulfovibrio vulgaris (strain ATCC 29579 / DSM 644 / CCUG 34227 / NCIMB 8303 / VKM B-1760 / Hildenborough) (Desulfovibrio vulgaris).